The chain runs to 292 residues: Acetylglutamate kinase (292 aa).

Residues 64–65 (GG), Arg-86, and Asn-190 each bind substrate.

Belongs to the acetylglutamate kinase family. ArgB subfamily.

It is found in the cytoplasm. The catalysed reaction is N-acetyl-L-glutamate + ATP = N-acetyl-L-glutamyl 5-phosphate + ADP. The protein operates within amino-acid biosynthesis; L-arginine biosynthesis; N(2)-acetyl-L-ornithine from L-glutamate: step 2/4. Functionally, catalyzes the ATP-dependent phosphorylation of N-acetyl-L-glutamate. In Trichlorobacter lovleyi (strain ATCC BAA-1151 / DSM 17278 / SZ) (Geobacter lovleyi), this protein is Acetylglutamate kinase.